Consider the following 583-residue polypeptide: Propane 2-monooxygenase operon transcriptional activator MimR (583 aa).

One can recognise a Sigma-54 factor interaction domain in the interval 320–513; sequence LAGQSSSFRR…LRHVLTETVR (194 aa). Residues 349 to 356 and 395 to 404 contribute to the ATP site; these read ERGSGRTY and SADFAVIVSD.

Functionally, acts as a transcriptional activator of the mimABCD operon encoding the propane 2-monooxygenase complex. In Mycolicibacterium smegmatis (strain ATCC 700084 / mc(2)155) (Mycobacterium smegmatis), this protein is Propane 2-monooxygenase operon transcriptional activator MimR.